The primary structure comprises 297 residues: N-acetylneuraminate lyase (297 aa).

Aceneuramate contacts are provided by Ser-47 and Thr-48. Tyr-137 functions as the Proton donor in the catalytic mechanism. Lys-165 (schiff-base intermediate with substrate) is an active-site residue. Residues Thr-167, Gly-189, Asp-191, Glu-192, and Ser-208 each coordinate aceneuramate.

Belongs to the DapA family. NanA subfamily. In terms of assembly, homotetramer.

The protein resides in the cytoplasm. The catalysed reaction is aceneuramate = aldehydo-N-acetyl-D-mannosamine + pyruvate. Its pathway is amino-sugar metabolism; N-acetylneuraminate degradation; D-fructose 6-phosphate from N-acetylneuraminate: step 1/5. Catalyzes the reversible aldol cleavage of N-acetylneuraminic acid (sialic acid; Neu5Ac) to form pyruvate and N-acetylmannosamine (ManNAc) via a Schiff base intermediate. The polypeptide is N-acetylneuraminate lyase (Escherichia fergusonii (strain ATCC 35469 / DSM 13698 / CCUG 18766 / IAM 14443 / JCM 21226 / LMG 7866 / NBRC 102419 / NCTC 12128 / CDC 0568-73)).